The primary structure comprises 84 residues: RNA-binding protein Hfq (84 aa).

One can recognise a Sm domain in the interval 9 to 68 (DPYLNTLRKERVPVSIYLVNGIKLQGQIESFDQFVILLKNTVSQMVYKHAISTVVPGRPV).

The protein belongs to the Hfq family. Homohexamer.

RNA chaperone that binds small regulatory RNA (sRNAs) and mRNAs to facilitate mRNA translational regulation in response to envelope stress, environmental stress and changes in metabolite concentrations. Also binds with high specificity to tRNAs. The protein is RNA-binding protein Hfq of Stutzerimonas stutzeri (strain A1501) (Pseudomonas stutzeri).